The primary structure comprises 265 residues: Synaptoporin (265 aa).

Residues 1 to 4 (MCMV) are Cytoplasmic-facing. Residues 1 to 202 (MCMVIFAPLF…NIWFVFKETG (202 aa)) enclose the MARVEL domain. A helical membrane pass occupies residues 5–25 (IFAPLFAMFAFATCGGYSGGL). The Vesicular segment spans residues 26–81 (RLSVDCVNKTESNLSIDIAFAYPFRLQQVTFEVPTCEGKEQQKLALVGDSSSSAEF). N-linked (GlcNAc...) asparagine glycans are attached at residues N33 and N38. Residues 82–102 (FVTVAVFAFLYSLAATVVYIF) form a helical membrane-spanning segment. Topologically, residues 103 to 114 (FQNKYRENNRGP) are cytoplasmic. Residues 115-135 (LIDFIVTVVFSFLWLVGSSAW) traverse the membrane as a helical segment. Topologically, residues 136–177 (AKGLSDVKVATDPKEVLLLMSACKQPSNKCMAVHSPVMSSLN) are vesicular. A helical membrane pass occupies residues 178–198 (TSVVFGFLNFILWAGNIWFVF). Topologically, residues 199 to 265 (KETGWHSSGQ…SGPTSFNNQI (67 aa)) are cytoplasmic. Tandem repeats lie at residues 210–214 (YLSDP), 222–226 (YNQGR), 227–231 (YNQES), 232–236 (YGSSG), and 238–242 (YSQQA). A 5 X approximate repeats region spans residues 210–242 (YLSDPMEKHSSSYNQGRYNQESYGSSGGYSQQA). Position 212 is a phosphoserine (S212). The segment covering 221–230 (SYNQGRYNQE) has biased composition (polar residues). Residues 221–265 (SYNQGRYNQESYGSSGGYSQQANLGPTSDEFGQQPSGPTSFNNQI) form a disordered region. Polar residues predominate over residues 240-265 (QQANLGPTSDEFGQQPSGPTSFNNQI).

It belongs to the synaptophysin/synaptobrevin family.

The protein resides in the cytoplasmic vesicle. It localises to the secretory vesicle. The protein localises to the synaptic vesicle membrane. Its subcellular location is the synapse. It is found in the synaptosome. Functionally, intrinsic membrane protein of small synaptic vesicles. Probable vesicular channel protein. This chain is Synaptoporin (Synpr), found in Mus musculus (Mouse).